The following is a 104-amino-acid chain: UPF0145 protein VIBHAR_02090 (104 aa).

The protein belongs to the UPF0145 family.

The chain is UPF0145 protein VIBHAR_02090 from Vibrio campbellii (strain ATCC BAA-1116).